A 647-amino-acid polypeptide reads, in one-letter code: ATP-binding protein Uup (647 aa).

2 ABC transporter domains span residues 1-253 (MALI…RVEA) and 320-546 (FEME…AKAK). ATP is bound by residues 36 to 43 (GRNGAGKS) and 352 to 359 (GPNGCGKT). Residues 545-563 (AKKSEPLKEESAVKNDRTS) are compositionally biased toward basic and acidic residues. The tract at residues 545–569 (AKKSEPLKEESAVKNDRTSKPKSVK) is disordered. The C-terminal domain (CTD), binds DNA stretch occupies residues 559 to 647 (NDRTSKPKSV…EKKNLVEGKA (89 aa)).

The protein belongs to the ABC transporter superfamily. ABCF family. Uup subfamily.

Its subcellular location is the cytoplasm. It catalyses the reaction ATP + H2O = ADP + phosphate + H(+). Functionally, probably plays a role in ribosome assembly or function. May be involved in resolution of branched DNA intermediates that result from template switching in postreplication gaps. Binds DNA and has ATPase activity. The polypeptide is ATP-binding protein Uup (Haemophilus influenzae (strain ATCC 51907 / DSM 11121 / KW20 / Rd)).